Reading from the N-terminus, the 162-residue chain is Cyclic pyranopterin monophosphate synthase (162 aa).

Residues 75–77 (LCH) and 113–114 (ME) each bind substrate. The active site involves aspartate 128.

This sequence belongs to the MoaC family. As to quaternary structure, homohexamer; trimer of dimers.

It catalyses the reaction (8S)-3',8-cyclo-7,8-dihydroguanosine 5'-triphosphate = cyclic pyranopterin phosphate + diphosphate. The protein operates within cofactor biosynthesis; molybdopterin biosynthesis. Its function is as follows. Catalyzes the conversion of (8S)-3',8-cyclo-7,8-dihydroguanosine 5'-triphosphate to cyclic pyranopterin monophosphate (cPMP). This chain is Cyclic pyranopterin monophosphate synthase, found in Burkholderia ambifaria (strain MC40-6).